The sequence spans 274 residues: Reaction center protein L chain (274 aa).

At 2–32 the chain is on the cytoplasmic side; it reads ALLSFERKYRVRGGTLIGGDLFDFWVGPYFV. A helical transmembrane segment spans residues 33–53; the sequence is GFFGVSAIFFIFLGVSLIGYA. Over 54 to 83 the chain is Periplasmic; that stretch reads ASQGPTWDPFAISINPPDLKYGLGAAPLLE. Residues 84–111 form a helical membrane-spanning segment; the sequence is GGFWQAITVCALGAFISWMLREVEISRK. The Cytoplasmic segment spans residues 112–115; it reads LGIG. A helical transmembrane segment spans residues 116-139; that stretch reads WHVPLAFCVPIFMFCVLQVFRPLL. Over 140–170 the chain is Periplasmic; that stretch reads LGSWGHAFPYGILSHLDWVNNFGYQYLNWHY. Positions 154 and 174 each coordinate (7R,8Z)-bacteriochlorophyll b. Residues 171–198 traverse the membrane as a helical segment; sequence NPGHMSSVSFLFVNAMALGLHGGLILSV. His-191 contacts Fe cation. Topologically, residues 199 to 225 are cytoplasmic; sequence ANPGDGDKVKTAEHENQYFRDVVGYSI. An a ubiquinone-binding site is contributed by Phe-217. Residues 226 to 249 form a helical membrane-spanning segment; it reads GALSIHRLGLFLASNIFLTGAFGT. His-231 contacts Fe cation. Topologically, residues 250-274 are periplasmic; sequence IASGPFWTRGWPEWWGWWLDIPFWS.

Belongs to the reaction center PufL/M/PsbA/D family. Reaction center is composed of four bacteriochlorophylls, two bacteriopheophytins, two ubiquinones, one iron, and three highly hydrophobic polypeptide chains (designated L, M, and H).

The protein resides in the cellular chromatophore membrane. Functionally, the reaction center is a membrane-bound complex that mediates the initial photochemical event in the electron transfer process of photosynthesis. The chain is Reaction center protein L chain (pufL) from Blastochloris viridis (Rhodopseudomonas viridis).